A 472-amino-acid polypeptide reads, in one-letter code: Cysteine--tRNA ligase (472 aa).

Cysteine 29 contributes to the Zn(2+) binding site. The short motif at 31-41 is the 'HIGH' region element; the sequence is PTVYNYIHIGN. The Zn(2+) site is built by cysteine 214, histidine 239, and glutamate 243. Residues 273–277 carry the 'KMSKS' region motif; it reads KMSKS. Lysine 276 is an ATP binding site.

Belongs to the class-I aminoacyl-tRNA synthetase family. As to quaternary structure, monomer. Requires Zn(2+) as cofactor.

Its subcellular location is the cytoplasm. It carries out the reaction tRNA(Cys) + L-cysteine + ATP = L-cysteinyl-tRNA(Cys) + AMP + diphosphate. This Lactobacillus gasseri (strain ATCC 33323 / DSM 20243 / BCRC 14619 / CIP 102991 / JCM 1131 / KCTC 3163 / NCIMB 11718 / NCTC 13722 / AM63) protein is Cysteine--tRNA ligase.